We begin with the raw amino-acid sequence, 283 residues long: RNase adapter protein RapZ (283 aa).

8–15 (GRSGSGKS) is an ATP binding site. A GTP-binding site is contributed by 56-59 (DVRN). The interval 266 to 283 (RSRGKNVQSRHRTLEKRK) is RNA-binding.

The protein belongs to the RapZ-like family. RapZ subfamily. As to quaternary structure, homotrimer.

Functionally, modulates the synthesis of GlmS, by affecting the processing and stability of the regulatory small RNA GlmZ. When glucosamine-6-phosphate (GlcN6P) concentrations are high in the cell, RapZ binds GlmZ and targets it to cleavage by RNase E. Consequently, GlmZ is inactivated and unable to activate GlmS synthesis. Under low GlcN6P concentrations, RapZ is sequestered and inactivated by an other regulatory small RNA, GlmY, preventing GlmZ degradation and leading to synthesis of GlmS. This Photorhabdus laumondii subsp. laumondii (strain DSM 15139 / CIP 105565 / TT01) (Photorhabdus luminescens subsp. laumondii) protein is RNase adapter protein RapZ.